The chain runs to 318 residues: Biotin synthase (318 aa).

Residues 44-273 enclose the Radical SAM core domain; that stretch reads LCGKKFNLCT…EKQIRLAGGR (230 aa). [4Fe-4S] cluster contacts are provided by Cys-62, Cys-66, and Cys-69. Residues Ser-106, Cys-138, Cys-198, and Arg-268 each coordinate [2Fe-2S] cluster.

It belongs to the radical SAM superfamily. Biotin synthase family. As to quaternary structure, homodimer. [4Fe-4S] cluster serves as cofactor. [2Fe-2S] cluster is required as a cofactor.

The catalysed reaction is (4R,5S)-dethiobiotin + (sulfur carrier)-SH + 2 reduced [2Fe-2S]-[ferredoxin] + 2 S-adenosyl-L-methionine = (sulfur carrier)-H + biotin + 2 5'-deoxyadenosine + 2 L-methionine + 2 oxidized [2Fe-2S]-[ferredoxin]. It functions in the pathway cofactor biosynthesis; biotin biosynthesis; biotin from 7,8-diaminononanoate: step 2/2. Catalyzes the conversion of dethiobiotin (DTB) to biotin by the insertion of a sulfur atom into dethiobiotin via a radical-based mechanism. The sequence is that of Biotin synthase from Clostridium botulinum (strain Alaska E43 / Type E3).